The chain runs to 155 residues: MIDKSGYRANVAIVLLNKQNRVFWGQRRNRTSWQFPQGGVDTGETPLQAMYRELHEEIGLRPQDVEVIASTRDWYKYDIPDSLVRTKEPICIGQKQKWFLLKLKSPESYIDLDANDSPEFDNWRWVSYWYPINHVVYFKQEVYRKALTYFKEYIA.

Residues 6–148 (GYRANVAIVL…KQEVYRKALT (143 aa)) enclose the Nudix hydrolase domain. Positions 38-59 (GGVDTGETPLQAMYRELHEEIG) match the Nudix box motif.

This sequence belongs to the Nudix hydrolase family. RppH subfamily. It depends on a divalent metal cation as a cofactor.

Accelerates the degradation of transcripts by removing pyrophosphate from the 5'-end of triphosphorylated RNA, leading to a more labile monophosphorylated state that can stimulate subsequent ribonuclease cleavage. The protein is RNA pyrophosphohydrolase of Francisella tularensis subsp. mediasiatica (strain FSC147).